Here is a 1137-residue protein sequence, read N- to C-terminus: 2'-5'-oligoadenylate synthase 3 (1137 aa).

Met-1 is subject to N-acetylmethionine. Residues 6-341 (TPAGALDKLV…GALVQPWEGP (336 aa)) form an OAS domain 1 region. 2 interaction with dsRNA regions span residues 12–56 (DKLV…VIRI) and 185–199 (ELRKNFVNIRPVKLK). Residues 342–461 (GLPCAGILDL…GSQMGPDLSQ (120 aa)) form a linker region. The segment covering 434 to 453 (QSTASSNTPPGHSSMSTAGS) has biased composition (polar residues). The disordered stretch occupies residues 434-462 (QSTASSNTPPGHSSMSTAGSQMGPDLSQI). OAS domain regions lie at residues 462–792 (IPSK…PWDV) and 800–1134 (TPAQ…WPVK). Ser-854 contacts ATP. Positions 866, 868, and 938 each coordinate Mg(2+). ATP contacts are provided by Arg-997, Lys-1000, and Gln-1019.

It belongs to the 2-5A synthase family. Monomer. Mg(2+) serves as cofactor.

The protein localises to the cytoplasm. Its subcellular location is the nucleus. The catalysed reaction is 3 ATP = 5'-triphosphoadenylyl-(2'-&gt;5')-adenylyl-(2'-&gt;5')-adenosine + 2 diphosphate. Its activity is regulated as follows. Produced as a latent enzyme which is activated by dsRNA generated during the course of viral infection. Strongly activated by long dsRNAs at least 50 nucleotides in length. ssRNA does not activate the enzyme. Functionally, interferon-induced, dsRNA-activated antiviral enzyme which plays a critical role in cellular innate antiviral response. In addition, it may also play a role in other cellular processes such as apoptosis, cell growth, differentiation and gene regulation. Synthesizes preferentially dimers of 2'-5'-oligoadenylates (2-5A) from ATP which then bind to the inactive monomeric form of ribonuclease L (RNase L) leading to its dimerization and subsequent activation. Activation of RNase L leads to degradation of cellular as well as viral RNA, resulting in the inhibition of protein synthesis, thus terminating viral replication. Can mediate the antiviral effect via the classical RNase L-dependent pathway or an alternative antiviral pathway independent of RNase L. The sequence is that of 2'-5'-oligoadenylate synthase 3 (Oas3) from Rattus norvegicus (Rat).